Consider the following 640-residue polypeptide: Large subunit GTPase 1 homolog (640 aa).

In terms of domain architecture, CP-type G spans 165 to 426; that stretch reads WRQLWRVIER…LCDCPGLVMP (262 aa). 213–216 contacts GTP; that stretch reads NKAD. The segment at 251-341 is disordered; the sequence is AEERGEDAMD…ESTATSSFYN (91 aa). 3 stretches are compositionally biased toward acidic residues: residues 253 to 270, 290 to 304, and 320 to 331; these read ERGE…TEEE, EKDE…EGED, and ESGDEDHAEENP. Residues 332–341 show a composition bias toward polar residues; sequence ESTATSSFYN. GTP-binding positions include 375 to 382 and 419 to 422; these read GYPNVGKS and DCPG. Positions 602–640 are disordered; that stretch reads GPVEAGKANTEQQAGKPWKKHGNRNKKEKVRRLNKHLDA. A compositionally biased stretch (basic residues) spans 618–640; it reads PWKKHGNRNKKEKVRRLNKHLDA.

Belongs to the TRAFAC class YlqF/YawG GTPase family. LSG1 subfamily.

The protein localises to the cytoplasm. It localises to the endoplasmic reticulum. The protein resides in the nucleus. Its subcellular location is the cajal body. The enzyme catalyses GTP + H2O = GDP + phosphate + H(+). Its function is as follows. Functions as a GTPase. May act by mediating the release of NMD3 from the 60S ribosomal subunit after export into the cytoplasm during the 60S ribosomal subunit maturation. The polypeptide is Large subunit GTPase 1 homolog (Danio rerio (Zebrafish)).